Reading from the N-terminus, the 501-residue chain is Lysine--tRNA ligase (501 aa).

Glu411 and Glu418 together coordinate Mg(2+).

The protein belongs to the class-II aminoacyl-tRNA synthetase family. As to quaternary structure, homodimer. Requires Mg(2+) as cofactor.

Its subcellular location is the cytoplasm. It carries out the reaction tRNA(Lys) + L-lysine + ATP = L-lysyl-tRNA(Lys) + AMP + diphosphate. The protein is Lysine--tRNA ligase of Aliivibrio fischeri (strain ATCC 700601 / ES114) (Vibrio fischeri).